Consider the following 471-residue polypeptide: Siroheme synthase (471 aa).

The segment at 1-203 (MEYLPLFADL…GRLEQAEQAL (203 aa)) is precorrin-2 dehydrogenase /sirohydrochlorin ferrochelatase. NAD(+) contacts are provided by residues 22–23 (EV) and 43–44 (RA). Ser-128 bears the Phosphoserine mark. A uroporphyrinogen-III C-methyltransferase region spans residues 215–471 (GEVALVGAGP…QKRASVVNLA (257 aa)). An S-adenosyl-L-methionine-binding site is contributed by Pro-224. Asp-247 acts as the Proton acceptor in catalysis. The Proton donor role is filled by Lys-269. S-adenosyl-L-methionine contacts are provided by residues 300 to 302 (GGD), Ile-305, 330 to 331 (TA), Met-382, and Gly-411.

This sequence in the N-terminal section; belongs to the precorrin-2 dehydrogenase / sirohydrochlorin ferrochelatase family. The protein in the C-terminal section; belongs to the precorrin methyltransferase family.

The catalysed reaction is uroporphyrinogen III + 2 S-adenosyl-L-methionine = precorrin-2 + 2 S-adenosyl-L-homocysteine + H(+). It carries out the reaction precorrin-2 + NAD(+) = sirohydrochlorin + NADH + 2 H(+). It catalyses the reaction siroheme + 2 H(+) = sirohydrochlorin + Fe(2+). The protein operates within cofactor biosynthesis; adenosylcobalamin biosynthesis; precorrin-2 from uroporphyrinogen III: step 1/1. Its pathway is cofactor biosynthesis; adenosylcobalamin biosynthesis; sirohydrochlorin from precorrin-2: step 1/1. It participates in porphyrin-containing compound metabolism; siroheme biosynthesis; precorrin-2 from uroporphyrinogen III: step 1/1. It functions in the pathway porphyrin-containing compound metabolism; siroheme biosynthesis; siroheme from sirohydrochlorin: step 1/1. The protein operates within porphyrin-containing compound metabolism; siroheme biosynthesis; sirohydrochlorin from precorrin-2: step 1/1. Functionally, multifunctional enzyme that catalyzes the SAM-dependent methylations of uroporphyrinogen III at position C-2 and C-7 to form precorrin-2 via precorrin-1. Then it catalyzes the NAD-dependent ring dehydrogenation of precorrin-2 to yield sirohydrochlorin. Finally, it catalyzes the ferrochelation of sirohydrochlorin to yield siroheme. This chain is Siroheme synthase, found in Sodalis glossinidius (strain morsitans).